The following is a 364-amino-acid chain: tRNA 2-selenouridine synthase (364 aa).

In terms of domain architecture, Rhodanese spans 14–137 (LIADTPIIDV…LRQTAIQATI (124 aa)). The active-site S-selanylcysteine intermediate is the C97.

It belongs to the SelU family. Monomer.

The catalysed reaction is 5-methylaminomethyl-2-thiouridine(34) in tRNA + selenophosphate + (2E)-geranyl diphosphate + H2O + H(+) = 5-methylaminomethyl-2-selenouridine(34) in tRNA + (2E)-thiogeraniol + phosphate + diphosphate. The enzyme catalyses 5-methylaminomethyl-2-thiouridine(34) in tRNA + (2E)-geranyl diphosphate = 5-methylaminomethyl-S-(2E)-geranyl-thiouridine(34) in tRNA + diphosphate. It carries out the reaction 5-methylaminomethyl-S-(2E)-geranyl-thiouridine(34) in tRNA + selenophosphate + H(+) = 5-methylaminomethyl-2-(Se-phospho)selenouridine(34) in tRNA + (2E)-thiogeraniol. It catalyses the reaction 5-methylaminomethyl-2-(Se-phospho)selenouridine(34) in tRNA + H2O = 5-methylaminomethyl-2-selenouridine(34) in tRNA + phosphate. Functionally, involved in the post-transcriptional modification of the uridine at the wobble position (U34) of tRNA(Lys), tRNA(Glu) and tRNA(Gln). Catalyzes the conversion of 2-thiouridine (S2U-RNA) to 2-selenouridine (Se2U-RNA). Acts in a two-step process involving geranylation of 2-thiouridine (S2U) to S-geranyl-2-thiouridine (geS2U) and subsequent selenation of the latter derivative to 2-selenouridine (Se2U) in the tRNA chain. The polypeptide is tRNA 2-selenouridine synthase (Shigella flexneri serotype 5b (strain 8401)).